The sequence spans 781 residues: Tax1-binding protein 1 homolog A (781 aa).

Coiled-coil stretches lie at residues 148–453 (NSDI…QGDA) and 488–581 (DVEK…YMRE). Over residues 441–465 (KLTQQQETQQGDANRNDASTETTLE) the composition is skewed to polar residues. 2 disordered regions span residues 441 to 510 (KLTQ…EEEC) and 630 to 691 (ETRD…EAPA). The segment covering 484 to 495 (TVARDVEKSRDE) has biased composition (basic and acidic residues). Acidic residues predominate over residues 496-510 (EGNEQEEEDEEEEEC). The span at 646–656 (RPPPLAPPPWG) shows a compositional bias: pro residues. UBZ1-type zinc fingers lie at residues 716 to 742 (HKQCPLCEVIFPPHFEQSSFERHVESH) and 743 to 769 (WRVCPVCSEQFPLDCQQQLYEKHVHTH). Zn(2+) is bound by residues C719, C722, H738, H742, C746, C749, H765, and H769.

Little expression is observed during pectoral fin development, except for an elevated level of expression in the distal mesenchyme cells of some samples.

Its function is as follows. May have anti-apoptotic activity. This is Tax1-binding protein 1 homolog A from Danio rerio (Zebrafish).